A 173-amino-acid polypeptide reads, in one-letter code: MNRSEKAAIIEQLKSRAEAASIAVVTDFKGMPVEELTRLRVKLRENGCEYHVVKNTLARIAFTGTAHEPIGTRFKENCAVALGFDDPVAVAKALTDFAKTSKLFAIRHGSLEGKALSADQVSDLAKLPSKPELLARALGTMNAVPTNFVSLFANIIRSLLYVLKDLESKKAAA.

The protein belongs to the universal ribosomal protein uL10 family. Part of the ribosomal stalk of the 50S ribosomal subunit. The N-terminus interacts with L11 and the large rRNA to form the base of the stalk. The C-terminus forms an elongated spine to which L12 dimers bind in a sequential fashion forming a multimeric L10(L12)X complex.

Its function is as follows. Forms part of the ribosomal stalk, playing a central role in the interaction of the ribosome with GTP-bound translation factors. The polypeptide is Large ribosomal subunit protein uL10 (Nitratidesulfovibrio vulgaris (strain ATCC 29579 / DSM 644 / CCUG 34227 / NCIMB 8303 / VKM B-1760 / Hildenborough) (Desulfovibrio vulgaris)).